A 384-amino-acid polypeptide reads, in one-letter code: Glutamate 5-kinase (384 aa).

Residue Lys-24 participates in ATP binding. Substrate is bound by residues Ser-64, Asp-149, and Asn-161. ATP is bound by residues 181–182 (TD) and 223–229 (TGGMRTK). The PUA domain maps to 288 to 370 (PGAILIDAGA…RDIQTLLGYT (83 aa)).

Belongs to the glutamate 5-kinase family.

It localises to the cytoplasm. The enzyme catalyses L-glutamate + ATP = L-glutamyl 5-phosphate + ADP. It functions in the pathway amino-acid biosynthesis; L-proline biosynthesis; L-glutamate 5-semialdehyde from L-glutamate: step 1/2. Catalyzes the transfer of a phosphate group to glutamate to form L-glutamate 5-phosphate. The chain is Glutamate 5-kinase from Xylella fastidiosa (strain M23).